The sequence spans 184 residues: ATP synthase subunit b, chloroplastic (184 aa).

Residues 27 to 49 (LATNPINLSVVFGVLIFFGKGVL) traverse the membrane as a helical segment.

Belongs to the ATPase B chain family. F-type ATPases have 2 components, F(1) - the catalytic core - and F(0) - the membrane proton channel. F(1) has five subunits: alpha(3), beta(3), gamma(1), delta(1), epsilon(1). F(0) has four main subunits: a(1), b(1), b'(1) and c(10-14). The alpha and beta chains form an alternating ring which encloses part of the gamma chain. F(1) is attached to F(0) by a central stalk formed by the gamma and epsilon chains, while a peripheral stalk is formed by the delta, b and b' chains.

The protein resides in the plastid. Its subcellular location is the chloroplast thylakoid membrane. In terms of biological role, f(1)F(0) ATP synthase produces ATP from ADP in the presence of a proton or sodium gradient. F-type ATPases consist of two structural domains, F(1) containing the extramembraneous catalytic core and F(0) containing the membrane proton channel, linked together by a central stalk and a peripheral stalk. During catalysis, ATP synthesis in the catalytic domain of F(1) is coupled via a rotary mechanism of the central stalk subunits to proton translocation. Its function is as follows. Component of the F(0) channel, it forms part of the peripheral stalk, linking F(1) to F(0). This chain is ATP synthase subunit b, chloroplastic, found in Nasturtium officinale (Watercress).